Consider the following 368-residue polypeptide: uncharacterized protein (368 aa).

Helical transmembrane passes span 22–42 (VAGI…FTLI), 74–94 (FVKP…LLVL), 104–124 (FLKT…LNLF), 144–164 (VGDF…GASL), and 168–188 (WGVN…AVSL).

This sequence belongs to the MscS (TC 1.A.23) family.

The protein resides in the cell membrane. This is an uncharacterized protein from Aquifex aeolicus (strain VF5).